The chain runs to 211 residues: N-(5'-phosphoribosyl)anthranilate isomerase (211 aa).

The protein belongs to the TrpF family.

The enzyme catalyses N-(5-phospho-beta-D-ribosyl)anthranilate = 1-(2-carboxyphenylamino)-1-deoxy-D-ribulose 5-phosphate. The protein operates within amino-acid biosynthesis; L-tryptophan biosynthesis; L-tryptophan from chorismate: step 3/5. The polypeptide is N-(5'-phosphoribosyl)anthranilate isomerase (Desulfovibrio desulfuricans (strain ATCC 27774 / DSM 6949 / MB)).